Consider the following 152-residue polypeptide: Transcriptional repressor NrdR (152 aa).

Residues Cys3–Cys34 fold into a zinc finger. One can recognise an ATP-cone domain in the interval Pro49 to Ala139.

Belongs to the NrdR family. It depends on Zn(2+) as a cofactor.

Negatively regulates transcription of bacterial ribonucleotide reductase nrd genes and operons by binding to NrdR-boxes. The sequence is that of Transcriptional repressor NrdR from Psychrobacter arcticus (strain DSM 17307 / VKM B-2377 / 273-4).